Here is a 255-residue protein sequence, read N- to C-terminus: Pimeloyl-[acyl-carrier protein] methyl ester esterase (255 aa).

One can recognise an AB hydrolase-1 domain in the interval 16–242 (LVLLHGWGMN…SSHAPFITEP (227 aa)). Residues tryptophan 22, 82 to 83 (SL), and 143 to 147 (FMALQ) each bind substrate. The active-site Nucleophile is serine 82. Catalysis depends on residues aspartate 207 and histidine 235. Residue histidine 235 coordinates substrate.

Belongs to the AB hydrolase superfamily. Carboxylesterase BioH family. In terms of assembly, monomer.

The protein localises to the cytoplasm. The enzyme catalyses 6-carboxyhexanoyl-[ACP] methyl ester + H2O = 6-carboxyhexanoyl-[ACP] + methanol + H(+). Its pathway is cofactor biosynthesis; biotin biosynthesis. In terms of biological role, the physiological role of BioH is to remove the methyl group introduced by BioC when the pimeloyl moiety is complete. It allows to synthesize pimeloyl-ACP via the fatty acid synthetic pathway through the hydrolysis of the ester bonds of pimeloyl-ACP esters. This Vibrio vulnificus (strain YJ016) protein is Pimeloyl-[acyl-carrier protein] methyl ester esterase.